We begin with the raw amino-acid sequence, 138 residues long: Cysteine desulfuration protein SufE (138 aa).

Catalysis depends on C51, which acts as the Cysteine persulfide intermediate.

This sequence belongs to the SufE family. Homodimer. Interacts with SufS.

The protein localises to the cytoplasm. It participates in cofactor biosynthesis; iron-sulfur cluster biosynthesis. Functionally, participates in cysteine desulfuration mediated by SufS. Cysteine desulfuration mobilizes sulfur from L-cysteine to yield L-alanine and constitutes an essential step in sulfur metabolism for biosynthesis of a variety of sulfur-containing biomolecules. Functions as a sulfur acceptor for SufS, by mediating the direct transfer of the sulfur atom from the S-sulfanylcysteine of SufS, an intermediate product of cysteine desulfuration process. The protein is Cysteine desulfuration protein SufE of Escherichia coli O17:K52:H18 (strain UMN026 / ExPEC).